We begin with the raw amino-acid sequence, 151 residues long: UPF0208 membrane protein YfbV (151 aa).

The next 2 helical transmembrane spans lie at 46 to 65 and 69 to 91; these read YAIRFMPPIAVFTLCWQIAL and LGPAVATALFALSLPMQGLWWLG.

The protein belongs to the UPF0208 family.

Its subcellular location is the cell inner membrane. The sequence is that of UPF0208 membrane protein YfbV from Shigella boydii serotype 18 (strain CDC 3083-94 / BS512).